Here is a 72-residue protein sequence, read N- to C-terminus: Crustacean hyperglycemic hormone B (72 aa).

At Q1 the chain carries Pyrrolidone carboxylic acid. F3 carries the D-phenylalanine; in form CHHB-II modification. 3 cysteine pairs are disulfide-bonded: C7–C43, C23–C39, and C26–C52. A Valine amide modification is found at V72.

In terms of processing, stereoinversion of L-Phe (in CHHB-I) to D-Phe (in CHHB-II).

The protein resides in the secreted. Its function is as follows. Hormone found in the sinus gland of isopods and decapods which controls the blood sugar level. Has a secretagogue action over the amylase released from the midgut gland. May act as a stress hormone and may be involved in the control of molting and reproduction. The chain is Crustacean hyperglycemic hormone B from Cherax destructor (Common yabby crayfish).